Here is a 501-residue protein sequence, read N- to C-terminus: Lysine--tRNA ligase (501 aa).

Residues E412 and E419 each contribute to the Mg(2+) site.

Belongs to the class-II aminoacyl-tRNA synthetase family. As to quaternary structure, homodimer. The cofactor is Mg(2+).

The protein localises to the cytoplasm. The catalysed reaction is tRNA(Lys) + L-lysine + ATP = L-lysyl-tRNA(Lys) + AMP + diphosphate. In Pasteurella multocida (strain Pm70), this protein is Lysine--tRNA ligase (lysS).